Here is a 361-residue protein sequence, read N- to C-terminus: uncharacterized protein (361 aa).

This is an uncharacterized protein from Methanothermobacter thermautotrophicus (Methanobacterium thermoformicicum).